Reading from the N-terminus, the 523-residue chain is UDP-glucuronosyltransferase 3A1 (523 aa).

The first 22 residues, 1–22, serve as a signal peptide directing secretion; sequence MVGQRVLLLVAFLLSGVLLSEA. The Extracellular segment spans residues 23-483; that stretch reads AKILTISTLG…YAFQQPWHEQ (461 aa). Residue asparagine 52 is glycosylated (N-linked (GlcNAc...) asparagine). A helical membrane pass occupies residues 484–504; it reads YLIDVFVFLLGLTLGTMWLCG. The Cytoplasmic portion of the chain corresponds to 505–523; the sequence is KLLGVVARWLRGARKVKKT.

Belongs to the UDP-glycosyltransferase family.

The protein localises to the membrane. It carries out the reaction glucuronate acceptor + UDP-alpha-D-glucuronate = acceptor beta-D-glucuronoside + UDP + H(+). UDP-glucuronosyltransferases catalyze phase II biotransformation reactions in which lipophilic substrates are conjugated with glucuronic acid to increase water solubility and enhance excretion. They are of major importance in the conjugation and subsequent elimination of potentially toxic xenobiotics and endogenous compounds. The polypeptide is UDP-glucuronosyltransferase 3A1 (UGT3A1) (Homo sapiens (Human)).